A 684-amino-acid polypeptide reads, in one-letter code: uncharacterized protein (684 aa).

In terms of domain architecture, Helicase ATP-binding spans 54–239 (LKYLYNKKDV…LLFNRDFEVV (186 aa)). Position 67-74 (67-74 (TSTASGKS)) interacts with ATP. Residues 181–184 (DELH) carry the DEVH box motif. The region spanning 264-419 (LLRRLIENLV…YMPVNIKNRF (156 aa)) is the Helicase C-terminal domain.

The protein belongs to the helicase family.

This is an uncharacterized protein from Methanocaldococcus jannaschii (strain ATCC 43067 / DSM 2661 / JAL-1 / JCM 10045 / NBRC 100440) (Methanococcus jannaschii).